The chain runs to 329 residues: Transposable element Tc3 transposase (329 aa).

The DNA-binding element occupies 2–135 (PRGSALSDTE…LEFAKNNMGT (134 aa)).

Belongs to the transposase 5 family. As to quaternary structure, homodimer or homotetramer.

Its subcellular location is the nucleus. Its function is as follows. Binds specifically to the terminal nucleotides of the TC3 inverted repeat. Its expression results in frequent excision and transposition of endogenous TC3 elements. TC3 transposase acts by making double strand breaks at the ends of TC3 element. The excised element would then be inserted into a target sequence. The sequence is that of Transposable element Tc3 transposase (tc3a) from Caenorhabditis elegans.